A 332-amino-acid polypeptide reads, in one-letter code: Alanine racemase (332 aa).

The Proton acceptor; specific for D-alanine role is filled by Lys33. The residue at position 33 (Lys33) is an N6-(pyridoxal phosphate)lysine. Arg115 contacts substrate. The Proton acceptor; specific for L-alanine role is filled by Tyr245. Met286 contributes to the substrate binding site.

The protein belongs to the alanine racemase family. Pyridoxal 5'-phosphate is required as a cofactor.

The catalysed reaction is L-alanine = D-alanine. It participates in amino-acid biosynthesis; D-alanine biosynthesis; D-alanine from L-alanine: step 1/1. In terms of biological role, catalyzes the interconversion of L-alanine and D-alanine. May also act on other amino acids. The chain is Alanine racemase (alr) from Nitratiruptor sp. (strain SB155-2).